The sequence spans 364 residues: MTVPTTIRLPSKQTVILEGDDLRLRIDDNAPLPVLRPDEVLVRTMAVAINPCDYKMHERFPSPGAVDGCDFSGVILAIGAGVPSLGVSFQIGDRVCGAVHGSNPIRHDSGSFAEYIASEAEFTLKIPDSMSFEEAAALGGTGLATLGMALFRTLELPGTPEEPAQKPLTVLVHGGSSSVGTMAMQLLRLVGHIPITTCSPRNFALAKEYGAEEIFDYHEPDCGQKIKAYTRNTLRYVLDPFTDAKSIALCCGAMGRAGGRYACLEMYPDYLVEKRTLRVGFVMGPALLGHRLELDYGYERAADPEMRQFGIRWYRSIQWLLSKGQLKPHPLRVLPGRFDAILQGIEMLKSKSVSGEKLVVSIGM.

52 to 55 (CDYK) is a binding site for NADP(+). 141-148 (TGLATLGM) provides a ligand contact to substrate. Residues 176–179 (SSSV), 199–202 (SPRN), Tyr217, and 264–265 (LE) each bind NADP(+). 284–288 (GPALL) lines the substrate pocket. An NADP(+)-binding site is contributed by 353 to 354 (VS).

The protein belongs to the zinc-containing alcohol dehydrogenase family. As to quaternary structure, monomer.

The protein operates within mycotoxin biosynthesis. In terms of biological role, trans-enoyl reductase; part of the gene cluster that mediates the biosynthesis of a family of the mycotoxins cytochalasins E and K. The hybrid PKS-NRPS synthetase ccsA and the enoyl reductase ccsC are responsible for fusion of phenylalanine with an octaketide backbone and subsequent release of the stable tetramic acid precursor. The polyketide synthase module (PKS) of the PKS-NRPS ccsA is responsible for the synthesis of the octaketide backbone. The downstream nonribosomal peptide synthetase (NRPS) amidates the carboxyl end of the octaketide with a phenylalanine. A reductase-like domain (R) at the C-terminus catalyzes the reductive release of the polyketide-amino acid intermediate. Because ccsA lacks a designated enoylreductase (ER) domain, the required activity is provided the enoyl reductase ccsC. Upon formation of the 11-membered carbocycle-fused perhydroisoindolone intermediate, a number of oxidative steps are required to afford the final cytochalasin E and K, including two hydroxylations at C17 and C18, one alcohol oxidation at C17, one epoxidation at C6 and C7 and two Baeyer-Villiger oxidations. The oxidative modification at C17, C18 and the C6-C7 epoxidation are likely to be catalyzed by the two cytochrome P450 oxygenases ccsD and ccsG. CcsD may be responsible for the epoxidation of the C6-C7 double bond. CcsG may be responsible for the successive oxidative modifications at C17 and C18. The double Baeyer-Villiger oxidations of ketocytochalasin to precytochalasin and cytochalasin Z(16) are among the final steps leading to cytochalasin E and K and are catalyzed by ccsB. The first oxygen insertion step follows that of the classic BVMO mechanism, generating the ester precytochalasin. Release of precytochalasin into an aqueous environment can generate the shunt product iso-precytochalasin through spontaneous isomerization. Alternatively, precytochalasin can undergo further oxidation by ccsB to yield the in-line carbonate-containing cytochalasin Z(16). Cytochalasin Z(16) is a precursor to cytochalasin E and cytochalasin K, whereas iso-precytochalasin is a precursor to cytochalasin Z(17) and rosellichalasin. The hydrolyase ccsE may catalyze hydrolysis of epoxide bond in cytochalasin E to afford cytochalasin K. The function of ccsF has not been assigned but it may play a role in post-PKS-NRPS biosynthetic step, resistance or transport of cytochalasins and related PKS-NRPS products. The protein is Trans-enoyl reductase ccsC of Aspergillus clavatus (strain ATCC 1007 / CBS 513.65 / DSM 816 / NCTC 3887 / NRRL 1 / QM 1276 / 107).